The primary structure comprises 191 residues: Adenine phosphoribosyltransferase (191 aa).

The protein belongs to the purine/pyrimidine phosphoribosyltransferase family. As to quaternary structure, homodimer.

The protein localises to the cytoplasm. The catalysed reaction is AMP + diphosphate = 5-phospho-alpha-D-ribose 1-diphosphate + adenine. Its pathway is purine metabolism; AMP biosynthesis via salvage pathway; AMP from adenine: step 1/1. Catalyzes a salvage reaction resulting in the formation of AMP, that is energically less costly than de novo synthesis. The chain is Adenine phosphoribosyltransferase from Clavibacter sepedonicus (Clavibacter michiganensis subsp. sepedonicus).